Reading from the N-terminus, the 87-residue chain is Large ribosomal subunit protein bL27 (87 aa).

It belongs to the bacterial ribosomal protein bL27 family.

The polypeptide is Large ribosomal subunit protein bL27 (Paenarthrobacter aurescens (strain TC1)).